An 801-amino-acid polypeptide reads, in one-letter code: Phenylalanine--tRNA ligase beta subunit (801 aa).

Residues 39–153 form the tRNA-binding domain; sequence AEGLSKLVVG…EDAVPGESIF (115 aa). The region spanning 406–481 is the B5 domain; sequence TDDIQVSTSL…RIYGYDKLPT (76 aa). Residues Asp459, Asp465, Glu468, and Glu469 each coordinate Mg(2+). Residues 708 to 801 form the FDX-ACB domain; it reads TKFPAVSRDI…LTEKVGAEVR (94 aa).

This sequence belongs to the phenylalanyl-tRNA synthetase beta subunit family. Type 1 subfamily. In terms of assembly, tetramer of two alpha and two beta subunits. Mg(2+) is required as a cofactor.

The protein resides in the cytoplasm. The catalysed reaction is tRNA(Phe) + L-phenylalanine + ATP = L-phenylalanyl-tRNA(Phe) + AMP + diphosphate + H(+). The protein is Phenylalanine--tRNA ligase beta subunit of Streptococcus mutans serotype c (strain ATCC 700610 / UA159).